We begin with the raw amino-acid sequence, 262 residues long: Spindlin-W (262 aa).

Positions 1–49 (MKTPFGKSPAQRSRADAGHTRVSASMMKKRTSHKKHRNNVGPSKPISQP) are disordered. The span at 27–38 (MKKRTSHKKHRN) shows a compositional bias: basic residues.

It belongs to the SPIN/STSY family. In terms of tissue distribution, expressed predominantly in ovarian granulosa and thecal cell.

It is found in the nucleus. In terms of biological role, may play a role in mitosis. The protein is Spindlin-W (SPINW) of Gallus gallus (Chicken).